A 382-amino-acid polypeptide reads, in one-letter code: Gap junction alpha-1 protein (382 aa).

Over 2-23 (GDWSALGKLLDKVQAYSTAGGK) the chain is Cytoplasmic. Position 5 is a phosphoserine (serine 5). The chain crosses the membrane as a helical span at residues 24-44 (VWLSVLFIFRILLLGTAVESA). The Extracellular segment spans residues 45-76 (WGDEQSAFRCNTQQPGCENVCYDKSFPISHVR). 2 cysteine pairs are disulfide-bonded: cysteine 54–cysteine 192 and cysteine 187–cysteine 198. The chain crosses the membrane as a helical span at residues 77–97 (FWVLQIIFVSVPTLLYLAHVF). Over 98-155 (YVMRKEEKLNKKEEELKVAQTDGVNVEMHLKQIEIKKFKYGIEEHGKVKMRGGLLRTY) the chain is Cytoplasmic. A Glycyl lysine isopeptide (Lys-Gly) (interchain with G-Cter in SUMO) cross-link involves residue lysine 144. The helical transmembrane segment at 156–176 (IISILFKSIFEVAFLLIQWYI) threads the bilayer. Residues 177–207 (YGFSLSAVYTCKRDPCPHQVDCFLSRPTEKT) are Extracellular-facing. Residues 208–228 (IFIIFMLVVSLVSLALNIIEL) form a helical membrane-spanning segment. Residues 229–382 (FYVFFKGVKD…SRPRPDDLEI (154 aa)) are Cytoplasmic-facing. A Glycyl lysine isopeptide (Lys-Gly) (interchain with G-Cter in SUMO) cross-link involves residue lysine 237. Positions 244–382 (SDPYHTTSGA…SRPRPDDLEI (139 aa)) are interaction with NOV. Tyrosine 247 carries the post-translational modification Phosphotyrosine. A phosphoserine mark is found at serine 255 and serine 262. The segment at 264–382 (KYAYFNGCSS…SRPRPDDLEI (119 aa)) is interaction with UBQLN4. Cysteine 271 bears the S-nitrosocysteine mark. Residue threonine 275 is modified to Phosphothreonine. Residues serine 306 and serine 314 each carry the phosphoserine modification. Residues 317–332 (QNRMGQAGSTISNSHA) show a composition bias toward polar residues. The segment at 317 to 382 (QNRMGQAGST…SRPRPDDLEI (66 aa)) is disordered. A Phosphoserine; by CK1 modification is found at serine 325. Threonine 326 is modified (phosphothreonine). 2 positions are modified to phosphoserine; by CK1: serine 328 and serine 330. 2 positions are modified to phosphoserine: serine 344 and serine 365. Positions 362–374 (RPSSRASSRASSR) are enriched in low complexity. Serine 368 is modified (phosphoserine; by PKC/PRKCG and PKC/PRKCD). Serine 369 and serine 373 each carry phosphoserine.

This sequence belongs to the connexin family. Alpha-type (group II) subfamily. As to quaternary structure, a connexon is composed of a hexamer of connexins. Interacts with SGSM3. Interacts with RIC1/CIP150. Interacts with CNST and CSNK1D. Interacts (via C-terminus) with TJP1. Interacts (via C-terminus) with SRC (via SH3 domain). Interacts (not ubiquitinated) with UBQLN4 (via UBA domain). Interacts with NOV. Interacts with TMEM65. Interacts with ANK3/ANKG and PKP2. In terms of processing, phosphorylation at Ser-325, Ser-328 and Ser-330 by CK1 modulates gap junction assembly. Phosphorylated at Ser-368 by PRKCG; phosphorylation induces disassembly of gap junction plaques and inhibition of gap junction activity. Phosphorylation at Ser-368 by PRKCD triggers its internalization into small vesicles leading to proteasome-mediated degradation. Sumoylated with SUMO1, SUMO2 and SUMO3, which may regulate the level of functional Cx43 gap junctions at the plasma membrane. May be desumoylated by SENP1 or SENP2. Post-translationally, S-nitrosylation at Cys-271 is enriched at the muscle endothelial gap junction in arteries, it augments channel permeability and may regulate of smooth muscle cell to endothelial cell communication. In terms of processing, acetylated in the developing cortex; leading to delocalization from the cell membrane.

It is found in the cell membrane. It localises to the cell junction. The protein resides in the gap junction. Its subcellular location is the endoplasmic reticulum. In terms of biological role, gap junction protein that acts as a regulator of bladder capacity. A gap junction consists of a cluster of closely packed pairs of transmembrane channels, the connexons, through which materials of low MW diffuse from one cell to a neighboring cell. May play a critical role in the physiology of hearing by participating in the recycling of potassium to the cochlear endolymph. Negative regulator of bladder functional capacity: acts by enhancing intercellular electrical and chemical transmission, thus sensitizing bladder muscles to cholinergic neural stimuli and causing them to contract. May play a role in cell growth inhibition through the regulation of NOV expression and localization. Plays an essential role in gap junction communication in the ventricles. In Chlorocebus aethiops (Green monkey), this protein is Gap junction alpha-1 protein (GJA1).